The sequence spans 1217 residues: DNA-directed RNA polymerase subunit beta' (1217 aa).

4 residues coordinate Zn(2+): Cys-60, Cys-62, Cys-75, and Cys-78. Residues Asp-449, Asp-451, and Asp-453 each contribute to the Mg(2+) site. 4 residues coordinate Zn(2+): Cys-818, Cys-892, Cys-899, and Cys-902.

It belongs to the RNA polymerase beta' chain family. In terms of assembly, the RNAP catalytic core consists of 2 alpha, 1 beta, 1 beta' and 1 omega subunit. When a sigma factor is associated with the core the holoenzyme is formed, which can initiate transcription. Mg(2+) serves as cofactor. It depends on Zn(2+) as a cofactor.

The catalysed reaction is RNA(n) + a ribonucleoside 5'-triphosphate = RNA(n+1) + diphosphate. DNA-dependent RNA polymerase catalyzes the transcription of DNA into RNA using the four ribonucleoside triphosphates as substrates. This is DNA-directed RNA polymerase subunit beta' from Enterococcus faecalis (strain ATCC 700802 / V583).